A 1371-amino-acid chain; its full sequence is Perilipin-4 (1371 aa).

Basic and acidic residues predominate over residues 1–13 (MSAPDEGRRDPPK). A disordered region spans residues 1–22 (MSAPDEGRRDPPKPKGKTLGSF). Phosphoserine occurs at positions 25 and 31. The tract at residues 37–86 (ANAHSSARARPAADPTGAPAAEAAQPQAQVAAHPEQTAPWTEKELQPSEK) is disordered. Positions 44-72 (RARPAADPTGAPAAEAAQPQAQVAAHPEQ) are enriched in low complexity. A run of 27 repeats spans residues 109 to 141 (GVASVVDVAKGVVQGGLDTTRSALTGTKEVVSS), 142 to 174 (GVTGAMDMAKGAVQGGLDTSKAVLTGTKDTVST), 175 to 207 (GLTGAVNVAKGTVQAGVDTTKTVLTGTKDTVTT), 208 to 240 (GVMGAVNLAKGTVQTGVETSKAVLTGTKDAVST), 241 to 273 (GLTGAVNVARGSIQTGVDTSKTVLTGTKDTVCS), 274 to 306 (GVTGAMNVAKGTIQTGVDTSKTVLTGTKDTVCS), 307 to 339 (GVTGAMNVAKGTIQTGVDTSKTVLTGTKDTVCS), 340 to 372 (GVTGAMNVAKGTIQTGVDTTKTVLTGTKNTVCS), 373 to 405 (GVTGAVNLAKEAIQGGLDTTKSMVMGTKDTMST), 406 to 438 (GLTGAANVAKGAMQTGLNTTQNIATGTKDTVCS), 439 to 471 (GVTGAMNLARGTIQTGVDTTKIVLTGTKDTVCS), 472 to 504 (GVTGAANVAKGAVQGGLDTTKSVLTGTKDAVST), 505 to 537 (GLTGAVNVAKGTVQTGVDTTKTVLTGTKDTVCS), 538 to 570 (GVTSAVNVAKGAVQGGLDTTKSVVIGTKDTMST), 571 to 603 (GLTGAANVAKGAVQTGVDTAKTVLTGTKDTVTT), 604 to 636 (GLVGAVNVAKGTVQTGMDTTKTVLTGTKDTIYS), 637 to 669 (GVTSAVNVAKGAVQTGLKTTQNIATGTKNTFGS), 670 to 702 (GVTSAVNVAKGAAQTGVDTAKTVLTGTKDTVTT), 703 to 735 (GLMGAVNVAKGTVQTSVDTTKTVLTGTKDTVCS), 736 to 768 (GVTGAANVAKGAIQGGLDTTKSVLTGTKDAVST), 769 to 801 (GLTGAVKLAKGTVQTGMDTTKTVLTGTKDAVCS), 802 to 834 (GVTGAANVAKGAVQMGVDTAKTVLTGTKDTVCS), 835 to 867 (GVTGAANVAKGAVQTGLKTTQNIATGTKNTLGS), 868 to 900 (GVTGAAKVAKGAVQGGLDTTKSVLTGTKDAVST), 901 to 933 (GLTGAVNLAKGTVQTGVDTSKTVLTGTKDTVCS), 934 to 966 (GVTGAVNVAKGTVQTGVDTAKTVLSGAKDAVTT), and 967 to 999 (GVTGAVNVAKGTVQTGVDASKAVLMGTKDTVFS). The segment at 109-999 (GVASVVDVAK…LMGTKDTVFS (891 aa)) is 27 X 33 AA approximate tandem repeat. Residues 1060–1083 (PATSWGGLTSSRTTDNGGEQTALS) are compositionally biased toward polar residues. 2 disordered regions span residues 1060 to 1093 (PATSWGGLTSSRTTDNGGEQTALSPQEAPFSGIS) and 1240 to 1260 (QAPEGQPRLDQGSGASAEDAA).

Belongs to the perilipin family.

It localises to the cell membrane. The protein localises to the cytoplasm. The protein resides in the lipid droplet. Its function is as follows. May play a role in triacylglycerol packaging into adipocytes. May function as a coat protein involved in the biogenesis of lipid droplets. This is Perilipin-4 from Homo sapiens (Human).